The following is a 195-amino-acid chain: Glutathione S-transferase class-mu 26 kDa isozyme (195 aa).

The region spanning Met1 to Gly83 is the GST N-terminal domain. Residues Tyr7–Trp8, Trp41–Lys45, Asn54–Leu55, and Gln67–Ser68 contribute to the glutathione site. Residues Cys85–Lys195 form the GST C-terminal domain. Tyr111 contacts substrate.

It belongs to the GST superfamily. Mu family. As to quaternary structure, homodimer.

The catalysed reaction is RX + glutathione = an S-substituted glutathione + a halide anion + H(+). Functionally, conjugation of reduced glutathione to a wide number of exogenous and endogenous hydrophobic electrophiles. In terms of biological role, GST isoenzymes appear to play a central role in the parasite detoxification system. Other functions are also suspected including a role in increasing the solubility of haematin in the parasite gut. This chain is Glutathione S-transferase class-mu 26 kDa isozyme, found in Schistosoma mansoni (Blood fluke).